The chain runs to 337 residues: Ketol-acid reductoisomerase (NAD(P)(+)) (337 aa).

The KARI N-terminal Rossmann domain maps to 2–187 (ARMFYDADAN…GCTRAGVIET (186 aa)). Residues 25–28 (FGSQ), Arg48, and 88–91 (DEVQ) contribute to the NADP(+) site. His113 is a catalytic residue. Gly139 provides a ligand contact to NADP(+). Residues 188–333 (SFQEETETDL…AELRGMMPWL (146 aa)) form the KARI C-terminal knotted domain. Positions 196, 200, 232, and 236 each coordinate Mg(2+). Residue Ser257 participates in substrate binding.

The protein belongs to the ketol-acid reductoisomerase family. Mg(2+) serves as cofactor.

The enzyme catalyses (2R)-2,3-dihydroxy-3-methylbutanoate + NAD(+) = (2S)-2-acetolactate + NADH + H(+). The catalysed reaction is (2R)-2,3-dihydroxy-3-methylbutanoate + NADP(+) = (2S)-2-acetolactate + NADPH + H(+). Its pathway is amino-acid biosynthesis; L-isoleucine biosynthesis; L-isoleucine from 2-oxobutanoate: step 2/4. It functions in the pathway amino-acid biosynthesis; L-valine biosynthesis; L-valine from pyruvate: step 2/4. Its function is as follows. Involved in the biosynthesis of branched-chain amino acids (BCAA). Catalyzes an alkyl-migration followed by a ketol-acid reduction of (S)-2-acetolactate (S2AL) to yield (R)-2,3-dihydroxy-isovalerate. In the isomerase reaction, S2AL is rearranged via a Mg-dependent methyl migration to produce 3-hydroxy-3-methyl-2-ketobutyrate (HMKB). In the reductase reaction, this 2-ketoacid undergoes a metal-dependent reduction by NADPH or NADH to yield (R)-2,3-dihydroxy-isovalerate. This chain is Ketol-acid reductoisomerase (NAD(P)(+)), found in Syntrophomonas wolfei subsp. wolfei (strain DSM 2245B / Goettingen).